Reading from the N-terminus, the 134-residue chain is Small ribosomal subunit protein uS11 (134 aa).

The protein belongs to the universal ribosomal protein uS11 family. In terms of assembly, part of the 30S ribosomal subunit. Interacts with proteins S7 and S18. Binds to IF-3.

Its function is as follows. Located on the platform of the 30S subunit, it bridges several disparate RNA helices of the 16S rRNA. Forms part of the Shine-Dalgarno cleft in the 70S ribosome. In Frankia casuarinae (strain DSM 45818 / CECT 9043 / HFP020203 / CcI3), this protein is Small ribosomal subunit protein uS11.